The sequence spans 432 residues: Gamma-glutamyl phosphate reductase (432 aa).

It belongs to the gamma-glutamyl phosphate reductase family.

It localises to the cytoplasm. The catalysed reaction is L-glutamate 5-semialdehyde + phosphate + NADP(+) = L-glutamyl 5-phosphate + NADPH + H(+). The protein operates within amino-acid biosynthesis; L-proline biosynthesis; L-glutamate 5-semialdehyde from L-glutamate: step 2/2. Catalyzes the NADPH-dependent reduction of L-glutamate 5-phosphate into L-glutamate 5-semialdehyde and phosphate. The product spontaneously undergoes cyclization to form 1-pyrroline-5-carboxylate. The protein is Gamma-glutamyl phosphate reductase of Methylobacterium radiotolerans (strain ATCC 27329 / DSM 1819 / JCM 2831 / NBRC 15690 / NCIMB 10815 / 0-1).